Consider the following 201-residue polypeptide: Thylakoid membrane protein slr1796 (201 aa).

Residues 16–36 (FLIVSLAFAMLLLGIWGTLPF) form a helical membrane-spanning segment.

The protein resides in the cellular thylakoid membrane. The polypeptide is Thylakoid membrane protein slr1796 (Synechocystis sp. (strain ATCC 27184 / PCC 6803 / Kazusa)).